The sequence spans 380 residues: Cytochrome b (380 aa).

4 helical membrane-spanning segments follow: residues 33–53 (FGSLLGACLIIQTITGLFLAM), 77–98 (WMIRHLHANGASMLFICLFLHI), 113–133 (WNIGIILLFMTMMTAFMGYVL), and 178–198 (FFTLHFMLPFIITALTTLHLL). Residues His83 and His97 each contribute to the heme b site. 2 residues coordinate heme b: His182 and His196. Residue His201 coordinates a ubiquinone. 4 helical membrane-spanning segments follow: residues 226–246 (IKDILGLLLFLLALMTLTLLS), 288–308 (LGGVMALMLSILILTTIPALH), 320–340 (LSQFLYWLLITDLLVLTWIGG), and 347–367 (FITIGQVASVLYFTTILLLMP).

It belongs to the cytochrome b family. The cytochrome bc1 complex contains 11 subunits: 3 respiratory subunits (MT-CYB, CYC1 and UQCRFS1), 2 core proteins (UQCRC1 and UQCRC2) and 6 low-molecular weight proteins (UQCRH/QCR6, UQCRB/QCR7, UQCRQ/QCR8, UQCR10/QCR9, UQCR11/QCR10 and a cleavage product of UQCRFS1). This cytochrome bc1 complex then forms a dimer. Heme b is required as a cofactor.

The protein resides in the mitochondrion inner membrane. Functionally, component of the ubiquinol-cytochrome c reductase complex (complex III or cytochrome b-c1 complex) that is part of the mitochondrial respiratory chain. The b-c1 complex mediates electron transfer from ubiquinol to cytochrome c. Contributes to the generation of a proton gradient across the mitochondrial membrane that is then used for ATP synthesis. This chain is Cytochrome b (MT-CYB), found in Pongo pygmaeus (Bornean orangutan).